The sequence spans 37 residues: Large ribosomal subunit protein bL36c (37 aa).

The protein belongs to the bacterial ribosomal protein bL36 family.

Its subcellular location is the plastid. The protein localises to the chloroplast. This Vitis vinifera (Grape) protein is Large ribosomal subunit protein bL36c.